Here is a 92-residue protein sequence, read N- to C-terminus: Enhancer of yellow 2 transcription factor (92 aa).

Belongs to the ENY2 family. In terms of assembly, component of the nuclear pore complex (NPC)-associated TREX-2 complex (transcription and export complex 2). Component of the SAGA transcription coactivator-HAT complex. Within the SAGA complex, participates in a subcomplex of SAGA called the DUB module (deubiquitination module).

It localises to the nucleus. Its subcellular location is the nucleoplasm. Its function is as follows. Involved in mRNA export coupled transcription activation by association with both the TREX-2 and the SAGA complexes. The transcription regulatory histone acetylation (HAT) complex SAGA is a multiprotein complex that activates transcription by remodeling chromatin and mediating histone acetylation and deubiquitination. Within the SAGA complex, participates in a subcomplex that specifically deubiquitinates histones. The SAGA complex is recruited to specific gene promoters by activators, where it is required for transcription. The TREX-2 complex functions in docking export-competent ribonucleoprotein particles (mRNPs) to the nuclear entrance of the nuclear pore complex (nuclear basket). TREX-2 participates in mRNA export and accurate chromatin positioning in the nucleus by tethering genes to the nuclear periphery. This chain is Enhancer of yellow 2 transcription factor, found in Aedes aegypti (Yellowfever mosquito).